Reading from the N-terminus, the 261-residue chain is 7beta-hydroxysteroid dehydrogenase (261 aa).

NADP(+)-binding positions include 17–21 (TEGIG), 40–41 (RR), and 66–67 (DL). Tyr-156 serves as the catalytic Proton acceptor.

It belongs to the short-chain dehydrogenases/reductases (SDR) family. As to quaternary structure, homodimer.

It catalyses the reaction a 7beta-hydroxysteroid + NADP(+) = a 7-oxosteroid + NADPH + H(+). The enzyme catalyses ursocholate + NADP(+) = 3alpha,12alpha-dihydroxy-7-oxo-5beta-cholanate + NADPH + H(+). The catalysed reaction is 7-oxolithocholate + NADPH + H(+) = ursodeoxycholate + NADP(+). It carries out the reaction 3alpha,7beta-dihydroxy-12-oxo-5beta-cholan-24-oate + NADP(+) = 7,12-dioxo-lithocholate + NADPH + H(+). It catalyses the reaction 7beta-hydroxy-3,12-dioxo-5beta-cholan-24-oate + NADP(+) = dehydrocholate + NADPH + H(+). Its function is as follows. 7beta-hydroxysteroid dehydrogenase that catalyzes the reduction of the 7-oxo group of 7-oxosteroids, such as 3alpha,12alpha-dihydroxy-7-oxo-5beta-cholanate, 7-oxolithocholate, 7,12-dioxo-lithocholate and dehydrocholate, to the corresponding 7beta-hydroxysteroids. Is also able to catalyze the reverse oxidation reactions. Together with 7alpha-HSDH encoded in the adjacent gene, is likely involved in the epimerization of the hydroxy group at C-7 of primary bile acids through 7-keto bile acid intermediates. This is 7beta-hydroxysteroid dehydrogenase from Clostridium sardiniense (Clostridium absonum).